We begin with the raw amino-acid sequence, 220 residues long: Octanoyltransferase (220 aa).

Residues 31–211 enclose the BPL/LPL catalytic domain; that stretch reads GTAADHLLLL…HFARIFDFEM (181 aa). Substrate contacts are provided by residues 76 to 83, 143 to 145, and 156 to 158; these read RGGDVTYH, AIG, and GFA. The active-site Acyl-thioester intermediate is cysteine 174.

This sequence belongs to the LipB family.

The protein resides in the cytoplasm. The enzyme catalyses octanoyl-[ACP] + L-lysyl-[protein] = N(6)-octanoyl-L-lysyl-[protein] + holo-[ACP] + H(+). It functions in the pathway protein modification; protein lipoylation via endogenous pathway; protein N(6)-(lipoyl)lysine from octanoyl-[acyl-carrier-protein]: step 1/2. Functionally, catalyzes the transfer of endogenously produced octanoic acid from octanoyl-acyl-carrier-protein onto the lipoyl domains of lipoate-dependent enzymes. Lipoyl-ACP can also act as a substrate although octanoyl-ACP is likely to be the physiological substrate. The polypeptide is Octanoyltransferase (Solibacter usitatus (strain Ellin6076)).